The chain runs to 709 residues: F-box only protein 40 (709 aa).

The TRAF-type zinc finger occupies 53 to 112 (EHQLLCPLEQVPCLNSEYGCPLSMSRHKLAKHLQVCPASVVCCSMEWNRWPNVDSETTLH). Residues 232–280 (TNSSASCESKNKNDSEKEQISSGHNMVEGEGAPKKKEPQENQKQQDVRT) are disordered. Basic and acidic residues-rich tracts occupy residues 240–250 (SKNKNDSEKEQ) and 262–277 (GAPK…KQQD). The 55-residue stretch at 570–624 (QNSLTSLPLEILKYIAGFLDSVSLAQLSQVSVLMRNICATLLQERGMVLLQWKKK) folds into the F-box domain.

Directly interacts with SKP1 and CUL1. In terms of tissue distribution, expressed only in heart and skeletal muscle.

The protein localises to the cytoplasm. In terms of biological role, probable substrate-recognition component of the SCF (SKP1-CUL1-F-box protein)-type E3 ubiquitin ligase complex that may function in myogenesis. The protein is F-box only protein 40 (FBXO40) of Homo sapiens (Human).